The following is a 266-amino-acid chain: Hydroxyacylglutathione hydrolase (266 aa).

Zn(2+) contacts are provided by H53, H55, D57, H58, H118, D140, and H178.

Belongs to the metallo-beta-lactamase superfamily. Glyoxalase II family. In terms of assembly, monomer. Zn(2+) serves as cofactor.

It carries out the reaction an S-(2-hydroxyacyl)glutathione + H2O = a 2-hydroxy carboxylate + glutathione + H(+). Its pathway is secondary metabolite metabolism; methylglyoxal degradation; (R)-lactate from methylglyoxal: step 2/2. Thiolesterase that catalyzes the hydrolysis of S-D-lactoyl-glutathione to form glutathione and D-lactic acid. The sequence is that of Hydroxyacylglutathione hydrolase from Cupriavidus metallidurans (strain ATCC 43123 / DSM 2839 / NBRC 102507 / CH34) (Ralstonia metallidurans).